We begin with the raw amino-acid sequence, 460 residues long: Ammonium transporter Rh type C (460 aa).

At 1-9 (MIWNTNLRW) the chain is on the cytoplasmic side. The helical transmembrane segment at 10–30 (RLPVACLLLEVALIALFGVFV) threads the bilayer. Over 31–61 (RYDMDADPHWVQEKVIKNLSTDLENEFYYRY) the chain is Extracellular. An N-linked (GlcNAc...) asparagine glycan is attached at N48. A helical membrane pass occupies residues 62–82 (PSFQDVHVMIFVGFGFLMTFL). Residues 83-89 (QRYGYSS) lie on the Cytoplasmic side of the membrane. A helical membrane pass occupies residues 90–110 (VGFNFLLAAFGIQWALLMQGW). Over 111-125 (LQSFDGRYILVDLEN) the chain is Extracellular. The helical transmembrane segment at 126–145 (LINADFCVGSVCVAFGAVLG) threads the bilayer. Topologically, residues 146-151 (KVSPVQ) are cytoplasmic. Residues 152-174 (LLIMTLFQVTLFSINEYILLNLL) traverse the membrane as a helical segment. The Extracellular segment spans residues 175-179 (EVKDS). A helical membrane pass occupies residues 180-200 (GGSMTIHAFGAYFGLTVAWIL). At 201 to 219 (YRPNLHLSKERQSSTYHSD) the chain is on the cytoplasmic side. A helical transmembrane segment spans residues 220-240 (LFAMIGTLFLWMYWPSFNSAI). The Extracellular segment spans residues 241–251 (SNHGDAQHRAA). Residues 252–272 (INTYCSLAACVLTSVALSSAL) traverse the membrane as a helical segment. Residues 273–285 (HRKGKLDMVHIQN) are Cytoplasmic-facing. A helical membrane pass occupies residues 286-303 (ATLAGGVGLGTVAELMVL). The Extracellular segment spans residues 304–306 (PFG). A helical membrane pass occupies residues 307 to 329 (SLIIGFVCGIVSTLGFVYLTPFL). Residues 330–346 (ESRLHIQDTCGVHNLHG) are Cytoplasmic-facing. Residues 347-367 (IPGIIGGIAGAVTASIANIDL) traverse the membrane as a helical segment. Residues 368 to 396 (YGEEGLAYAFGIERSKLNWSPNMQGRFQA) lie on the Extracellular side of the membrane. Residues 397–417 (AGLFVSLAMALVGGVIVGVIL) form a helical membrane-spanning segment. Residues 418-460 (RLPFWGQAPDENCFEDAVYWEIPKEPKSTALRSEDSSIKPPEP) lie on the Cytoplasmic side of the membrane.

This sequence belongs to the ammonium transporter (TC 2.A.49) family. Rh subfamily. Homotrimer. N-glycosylated.

It is found in the apical cell membrane. The catalysed reaction is NH4(+)(in) = NH4(+)(out). It catalyses the reaction methylamine(out) = methylamine(in). The enzyme catalyses CO2(out) = CO2(in). Ammonium transporter involved in the maintenance of acid-base homeostasis. Transports ammonium and its related derivative methylammonium across the plasma membrane of epithelial cells likely contributing to renal transepithelial ammonia transport and ammonia metabolism. Postulated to primarily mediate an electroneutral bidirectional transport of NH3 ammonia species according to a mechanism that implies interaction of an NH4(+) ion with acidic residues of the pore entry followed by dissociation of NH4(+) into NH3 and H(+). As a result NH3 transits through the central pore and is protonated on the extracellular side reforming NH4(+). May act as a CO2 channel providing for renal acid secretion. The sequence is that of Ammonium transporter Rh type C (RHCG) from Bos taurus (Bovine).